The sequence spans 89 residues: Small ribosomal subunit protein uS15 (89 aa).

Basic and acidic residues predominate over residues 1 to 21 (MSLHQERKSELVSKFRTHESD). The disordered stretch occupies residues 1–25 (MSLHQERKSELVSKFRTHESDTGSP).

This sequence belongs to the universal ribosomal protein uS15 family. In terms of assembly, part of the 30S ribosomal subunit. Forms a bridge to the 50S subunit in the 70S ribosome, contacting the 23S rRNA.

In terms of biological role, one of the primary rRNA binding proteins, it binds directly to 16S rRNA where it helps nucleate assembly of the platform of the 30S subunit by binding and bridging several RNA helices of the 16S rRNA. Its function is as follows. Forms an intersubunit bridge (bridge B4) with the 23S rRNA of the 50S subunit in the ribosome. In Myxococcus xanthus (strain DK1622), this protein is Small ribosomal subunit protein uS15.